The primary structure comprises 425 residues: Diacetylchitobiose binding protein DasA (425 aa).

Residues 1–20 (MKRKLIAAIGIAGMMVSIAA) form the signal peptide. Cysteine 21 is lipidated: N-palmitoyl cysteine. Cysteine 21 carries S-diacylglycerol cysteine lipidation.

This sequence belongs to the bacterial solute-binding protein 1 family. The complex is composed of two ATP-binding proteins (MsiK), two transmembrane proteins (DasB and DasC) and a solute-binding protein (DasA).

It is found in the cell membrane. Functionally, part of the ABC transporter complex DasABC-MsiK involved in N,N'-diacetylchitobiose ((GlcNAc)2) uptake. Binds specifically to (GlcNAc)2. Can also bind to GlcNAc, (GlcNAc)3, (GlcNAc)4 and (GlcNAc)5, but it exhibits the highest affinity for (GlcNAc)2. Involved in the control of morphological differentiation. The sequence is that of Diacetylchitobiose binding protein DasA from Streptomyces coelicolor (strain ATCC BAA-471 / A3(2) / M145).